Consider the following 388-residue polypeptide: Chorismate synthase (388 aa).

Arg39 and Arg45 together coordinate NADP(+). Residues 132-134 (RSS), 251-252 (NA), Gly296, 311-315 (KPIPT), and Arg337 each bind FMN.

As to quaternary structure, homotetramer. FMNH2 is required as a cofactor.

The enzyme catalyses 5-O-(1-carboxyvinyl)-3-phosphoshikimate = chorismate + phosphate. It functions in the pathway metabolic intermediate biosynthesis; chorismate biosynthesis; chorismate from D-erythrose 4-phosphate and phosphoenolpyruvate: step 7/7. Its function is as follows. Catalyzes the anti-1,4-elimination of the C-3 phosphate and the C-6 proR hydrogen from 5-enolpyruvylshikimate-3-phosphate (EPSP) to yield chorismate, which is the branch point compound that serves as the starting substrate for the three terminal pathways of aromatic amino acid biosynthesis. This reaction introduces a second double bond into the aromatic ring system. In Staphylococcus aureus, this protein is Chorismate synthase.